Consider the following 971-residue polypeptide: Protein ALWAYS EARLY 1 (971 aa).

Over residues 1-11 the composition is skewed to basic residues; it reads MAPTRKSKSVN. Disordered regions lie at residues 1–40, 117–137, 197–260, 326–371, and 421–507; these read MAPT…LADK, SESE…LKRK, IEDF…MFEN, GLLE…GLED, and PKES…KISL. An SANT domain is found at 40 to 98; that stretch reads KLGPQWTKRELVRFYDAYRKYVGDWKKVAAAVRNNRSVEMVETLFCMNRAYLSLPEGTA. Basic and acidic residues-rich tracts occupy residues 209–219, 332–350, and 424–440; these read KQLDADDDASR, SSPH…KKSN, and STQD…EVDS. Positions 450–470 are enriched in polar residues; sequence SSQGPAKQLKTAKTTVESSSA.

Expressed ubiquitously in vegetative and reproductive tissues.

Its subcellular location is the nucleus. This is Protein ALWAYS EARLY 1 (ALY1) from Arabidopsis thaliana (Mouse-ear cress).